The sequence spans 162 residues: Solute carrier family 2, facilitated glucose transporter member 4 (162 aa).

Residues 1–13 (TSIFETAGVGQPA) are Extracellular-facing. The helical transmembrane segment at 14-34 (YATIGAGVVNTVFTLVSVFLV) threads the bilayer. Residue Asn23 participates in D-glucose binding. Residues 35-43 (ERAGRRTLH) lie on the Cytoplasmic side of the membrane. Residues 44–64 (LLGLAGMCGCAILMTIALLLL) form a helical membrane-spanning segment. Topologically, residues 65-75 (ERLPAMSYVSI) are extracellular. A helical membrane pass occupies residues 76-96 (VAIFGFVAFFEIGPGPIPWFI). Residues Glu86 and Trp94 each coordinate D-glucose. Residues 97 to 107 (VAELFSQGPRP) are Cytoplasmic-facing. Residues 108 to 128 (AAMAVAGFCNWTSNFIIGMGF) traverse the membrane as a helical segment. At 129–135 (QYIAXAM) the chain is on the extracellular side. The chain crosses the membrane as a helical span at residues 136–156 (GPYVFLLFAVLLLAFFIFTFL). Residues 157–162 (KVPETR) lie on the Cytoplasmic side of the membrane.

Belongs to the major facilitator superfamily. Sugar transporter (TC 2.A.1.1) family. Glucose transporter subfamily. In terms of assembly, binds to DAXX. Interacts via its N-terminus with SRFBP1. Interacts with NDUFA9. Interacts with TRARG1; the interaction is required for proper SLC2A4 recycling after insulin stimulation. Sumoylated. Post-translationally, palmitoylated. Palmitoylation by ZDHHC7 controls the insulin-dependent translocation of GLUT4 to the plasma membrane.

The protein resides in the cell membrane. Its subcellular location is the endomembrane system. It localises to the cytoplasm. The protein localises to the perinuclear region. It carries out the reaction D-glucose(out) = D-glucose(in). In terms of biological role, insulin-regulated facilitative glucose transporter, which plays a key role in removal of glucose from circulation. Response to insulin is regulated by its intracellular localization: in the absence of insulin, it is efficiently retained intracellularly within storage compartments in muscle and fat cells. Upon insulin stimulation, translocates from these compartments to the cell surface where it transports glucose from the extracellular milieu into the cell. This Canis lupus familiaris (Dog) protein is Solute carrier family 2, facilitated glucose transporter member 4.